The primary structure comprises 283 residues: 2-dehydro-3-deoxyphosphooctonate aldolase (283 aa).

The protein belongs to the KdsA family.

It is found in the cytoplasm. It carries out the reaction D-arabinose 5-phosphate + phosphoenolpyruvate + H2O = 3-deoxy-alpha-D-manno-2-octulosonate-8-phosphate + phosphate. The protein operates within carbohydrate biosynthesis; 3-deoxy-D-manno-octulosonate biosynthesis; 3-deoxy-D-manno-octulosonate from D-ribulose 5-phosphate: step 2/3. It functions in the pathway bacterial outer membrane biogenesis; lipopolysaccharide biosynthesis. This chain is 2-dehydro-3-deoxyphosphooctonate aldolase, found in Synechococcus sp. (strain WH7803).